Here is a 461-residue protein sequence, read N- to C-terminus: Cysteine--tRNA ligase (461 aa).

Cys-30 contributes to the Zn(2+) binding site. Positions 32–42 (VTVYDLCHIGH) match the 'HIGH' region motif. Zn(2+) is bound by residues Cys-211, His-236, and Glu-240. The short motif at 268-272 (KMSKS) is the 'KMSKS' region element. Lys-271 contributes to the ATP binding site.

This sequence belongs to the class-I aminoacyl-tRNA synthetase family. As to quaternary structure, monomer. The cofactor is Zn(2+).

It localises to the cytoplasm. It carries out the reaction tRNA(Cys) + L-cysteine + ATP = L-cysteinyl-tRNA(Cys) + AMP + diphosphate. In Shewanella sp. (strain MR-7), this protein is Cysteine--tRNA ligase.